A 203-amino-acid chain; its full sequence is Glycerol-3-phosphate acyltransferase (203 aa).

6 consecutive transmembrane segments (helical) span residues 5–25, 58–78, 87–107, 118–138, 150–170, and 176–196; these read IIYL…LAQI, TLAV…ILMA, ILWT…YLKF, GVLA…WFII, LGAM…IPVI, and IFII…RLIG.

Belongs to the PlsY family. In terms of assembly, probably interacts with PlsX.

The protein resides in the cell inner membrane. The catalysed reaction is an acyl phosphate + sn-glycerol 3-phosphate = a 1-acyl-sn-glycero-3-phosphate + phosphate. Its pathway is lipid metabolism; phospholipid metabolism. Catalyzes the transfer of an acyl group from acyl-phosphate (acyl-PO(4)) to glycerol-3-phosphate (G3P) to form lysophosphatidic acid (LPA). This enzyme utilizes acyl-phosphate as fatty acyl donor, but not acyl-CoA or acyl-ACP. This is Glycerol-3-phosphate acyltransferase from Campylobacter lari (strain RM2100 / D67 / ATCC BAA-1060).